Consider the following 109-residue polypeptide: Co-chaperonin GroES (109 aa).

Belongs to the GroES chaperonin family. In terms of assembly, heptamer of 7 subunits arranged in a ring. Interacts with the chaperonin GroEL.

The protein resides in the cytoplasm. In terms of biological role, together with the chaperonin GroEL, plays an essential role in assisting protein folding. The GroEL-GroES system forms a nano-cage that allows encapsulation of the non-native substrate proteins and provides a physical environment optimized to promote and accelerate protein folding. GroES binds to the apical surface of the GroEL ring, thereby capping the opening of the GroEL channel. The chain is Co-chaperonin GroES from Methanosarcina acetivorans (strain ATCC 35395 / DSM 2834 / JCM 12185 / C2A).